The chain runs to 270 residues: Short chain dehydrogenase/reductase dpfgG (270 aa).

NADP(+)-binding residues include I18, D69, N96, K130, K171, I200, and N204. Catalysis depends on K171, which acts as the Lowers pKa of active site Tyr.

It belongs to the short-chain dehydrogenases/reductases (SDR) family.

Its pathway is secondary metabolite biosynthesis; terpenoid biosynthesis. Short chain dehydrogenase/reductase; part of the gene cluster that mediates the biosynthesis of diterpenoid pyrones. The first step of the pathway is the synthesis of the alpha-pyrone moiety by the polyketide synthase dpfgA via condensation of one acetyl-CoA starter unit with 3 malonyl-CoA units and 2 methylations. The alpha-pyrone is then combined with geranylgeranyl pyrophosphate (GGPP) formed by the GGPP synthase dpfgD through the action of the prenyltransferase dpfgC to yield a linear alpha-pyrone diterpenoid. Subsequent steps in the diterpenoid pyrone biosynthetic pathway involve the decalin core formation, which is initiated by the epoxidation of the C10-C11 olefin by the FAD-dependent oxidoreductase dpfgE, and is followed by a cyclization cascade catalyzed by the terpene cyclase dpfgB. The short chain dehydrogenase/reductase dpfgG then oxidizes the 8S hydroxy group to a ketone and the short chain dehydrogenase/reductase dpfgH reduces the ketone to the 8R hydroxy group to yield higginsianin B. Higginsianin B is further methylated by the methyltransferase dpfgI to produce the intermediate named FDDP B. The cytochrome P450 monooxygenase dfgpJ then catalyzes a three-step oxidation at C-27 to generate a carboxylic acid as well as C-26 hydroxylation. Finally, methyltransferase dpfgK methylates the carboxylic acid generated by dpfgJ, yielding the final diterpenoid pyrones from the pathway which were named FDDP D and FDDP E. The protein is Short chain dehydrogenase/reductase dpfgG of Gibberella zeae (strain ATCC MYA-4620 / CBS 123657 / FGSC 9075 / NRRL 31084 / PH-1) (Wheat head blight fungus).